Reading from the N-terminus, the 218-residue chain is Cytochrome b6 (218 aa).

A helical membrane pass occupies residues 35–55 (IFYCLGGITLVCFLIQFATGF). C38 is a heme c binding site. H89 and H103 together coordinate heme b. The next 3 helical transmembrane spans lie at 93–113 (ASMMVLMLILHVFRVYLTGGF), 119–139 (LTWVTGVVMAVITVAFGVTGY), and 189–209 (LHTFVLPWSLAVFMLMHFLMI). Residues H190 and H205 each coordinate heme b.

The protein belongs to the cytochrome b family. PetB subfamily. In terms of assembly, the 4 large subunits of the cytochrome b6-f complex are cytochrome b6, subunit IV (17 kDa polypeptide, PetD), cytochrome f and the Rieske protein, while the 4 small subunits are PetG, PetL, PetM and PetN. The complex functions as a dimer. It depends on heme b as a cofactor. The cofactor is heme c.

Its subcellular location is the cellular thylakoid membrane. Component of the cytochrome b6-f complex, which mediates electron transfer between photosystem II (PSII) and photosystem I (PSI), cyclic electron flow around PSI, and state transitions. In Prochlorococcus marinus (strain MIT 9301), this protein is Cytochrome b6.